The chain runs to 284 residues: 2-dehydro-3-deoxyphosphooctonate aldolase (284 aa).

Belongs to the KdsA family.

It localises to the cytoplasm. It catalyses the reaction D-arabinose 5-phosphate + phosphoenolpyruvate + H2O = 3-deoxy-alpha-D-manno-2-octulosonate-8-phosphate + phosphate. It participates in carbohydrate biosynthesis; 3-deoxy-D-manno-octulosonate biosynthesis; 3-deoxy-D-manno-octulosonate from D-ribulose 5-phosphate: step 2/3. It functions in the pathway bacterial outer membrane biogenesis; lipopolysaccharide biosynthesis. The polypeptide is 2-dehydro-3-deoxyphosphooctonate aldolase (Serratia proteamaculans (strain 568)).